Here is a 598-residue protein sequence, read N- to C-terminus: Glutamine--fructose-6-phosphate aminotransferase [isomerizing] (598 aa).

Cys2 acts as the Nucleophile; for GATase activity in catalysis. The Glutamine amidotransferase type-2 domain maps to 2-219 (CGIIGYIGPR…DGEYGIVSKD (218 aa)). SIS domains are found at residues 280 to 420 (VAEL…LVGI) and 449 to 588 (IAVK…PDRP). Lys593 functions as the For Fru-6P isomerization activity in the catalytic mechanism.

In terms of assembly, homodimer.

The protein localises to the cytoplasm. The enzyme catalyses D-fructose 6-phosphate + L-glutamine = D-glucosamine 6-phosphate + L-glutamate. Catalyzes the first step in hexosamine metabolism, converting fructose-6P into glucosamine-6P using glutamine as a nitrogen source. In Pyrococcus horikoshii (strain ATCC 700860 / DSM 12428 / JCM 9974 / NBRC 100139 / OT-3), this protein is Glutamine--fructose-6-phosphate aminotransferase [isomerizing].